The following is a 430-amino-acid chain: Hydrogenobyrinate a,c-diamide synthase (430 aa).

Residues 239 to 422 enclose the GATase cobBQ-type domain; sequence RIGVARDAAF…IHFYLPSDPL (184 aa). Cys-321 serves as the catalytic Nucleophile.

The protein belongs to the CobB/CbiA family. Mg(2+) is required as a cofactor.

The catalysed reaction is hydrogenobyrinate + 2 L-glutamine + 2 ATP + 2 H2O = hydrogenobyrinate a,c-diamide + 2 L-glutamate + 2 ADP + 2 phosphate + 2 H(+). It participates in cofactor biosynthesis; adenosylcobalamin biosynthesis; cob(II)yrinate a,c-diamide from precorrin-2 (aerobic route): step 9/10. Its function is as follows. Catalyzes the ATP-dependent amidation of the two carboxylate groups at positions a and c of hydrogenobyrinate, using either L-glutamine or ammonia as the nitrogen source. This Stutzerimonas stutzeri (strain A1501) (Pseudomonas stutzeri) protein is Hydrogenobyrinate a,c-diamide synthase.